Here is a 218-residue protein sequence, read N- to C-terminus: Ribosomal RNA small subunit methyltransferase G (218 aa).

Residues G82, L87, 133 to 134, and R147 each bind S-adenosyl-L-methionine; that span reads VE.

It belongs to the methyltransferase superfamily. RNA methyltransferase RsmG family.

Its subcellular location is the cytoplasm. The enzyme catalyses guanosine(527) in 16S rRNA + S-adenosyl-L-methionine = N(7)-methylguanosine(527) in 16S rRNA + S-adenosyl-L-homocysteine. Its function is as follows. Specifically methylates the N7 position of guanine in position 527 of 16S rRNA. In Leptothrix cholodnii (strain ATCC 51168 / LMG 8142 / SP-6) (Leptothrix discophora (strain SP-6)), this protein is Ribosomal RNA small subunit methyltransferase G.